Consider the following 205-residue polypeptide: Holliday junction branch migration complex subunit RuvA (205 aa).

Residues 1–64 form a domain I region; that stretch reads MIGRLRGIIL…EDAQLLYGFN (64 aa). The interval 65-143 is domain II; sequence DKQERALFRE…GLNGDLFNNT (79 aa). A flexible linker region spans residues 144 to 156; that stretch reads GDIQLPASNSSQI. Positions 157-205 are domain III; sequence SDADIEAEAASALVALGYKPQEASRLVSKIAKPGADCETLIRDALRAAL.

Belongs to the RuvA family. As to quaternary structure, homotetramer. Forms an RuvA(8)-RuvB(12)-Holliday junction (HJ) complex. HJ DNA is sandwiched between 2 RuvA tetramers; dsDNA enters through RuvA and exits via RuvB. An RuvB hexamer assembles on each DNA strand where it exits the tetramer. Each RuvB hexamer is contacted by two RuvA subunits (via domain III) on 2 adjacent RuvB subunits; this complex drives branch migration. In the full resolvosome a probable DNA-RuvA(4)-RuvB(12)-RuvC(2) complex forms which resolves the HJ.

The protein localises to the cytoplasm. In terms of biological role, the RuvA-RuvB-RuvC complex processes Holliday junction (HJ) DNA during genetic recombination and DNA repair, while the RuvA-RuvB complex plays an important role in the rescue of blocked DNA replication forks via replication fork reversal (RFR). RuvA specifically binds to HJ cruciform DNA, conferring on it an open structure. The RuvB hexamer acts as an ATP-dependent pump, pulling dsDNA into and through the RuvAB complex. HJ branch migration allows RuvC to scan DNA until it finds its consensus sequence, where it cleaves and resolves the cruciform DNA. The protein is Holliday junction branch migration complex subunit RuvA of Yersinia enterocolitica serotype O:8 / biotype 1B (strain NCTC 13174 / 8081).